The chain runs to 347 residues: Phenylalanine--tRNA ligase alpha subunit (347 aa).

E261 contacts Mg(2+).

This sequence belongs to the class-II aminoacyl-tRNA synthetase family. Phe-tRNA synthetase alpha subunit type 1 subfamily. As to quaternary structure, tetramer of two alpha and two beta subunits. It depends on Mg(2+) as a cofactor.

Its subcellular location is the cytoplasm. It catalyses the reaction tRNA(Phe) + L-phenylalanine + ATP = L-phenylalanyl-tRNA(Phe) + AMP + diphosphate + H(+). The protein is Phenylalanine--tRNA ligase alpha subunit of Streptococcus uberis (strain ATCC BAA-854 / 0140J).